Reading from the N-terminus, the 106-residue chain is UPF0145 protein CPF_0876 (106 aa).

This sequence belongs to the UPF0145 family.

This chain is UPF0145 protein CPF_0876, found in Clostridium perfringens (strain ATCC 13124 / DSM 756 / JCM 1290 / NCIMB 6125 / NCTC 8237 / Type A).